A 482-amino-acid chain; its full sequence is PHD finger protein At3g20280 (482 aa).

The PHD-type zinc finger occupies alanine 45–alanine 97. Disordered stretches follow at residues threonine 188–serine 210 and serine 314–alanine 482. Positions serine 314–serine 324 are enriched in low complexity. 2 stretches are compositionally biased toward polar residues: residues alanine 377–proline 386 and glutamine 393–serine 428. Over residues aspartate 447 to alanine 482 the composition is skewed to basic and acidic residues.

This Arabidopsis thaliana (Mouse-ear cress) protein is PHD finger protein At3g20280.